Here is a 331-residue protein sequence, read N- to C-terminus: Homeobox protein DBX1 (331 aa).

2 disordered regions span residues 56 to 94 (RAVP…ISSN) and 232 to 331 (KERE…ITVS). Positions 173–232 (GMLRRAVFSDVQRKALEKMFQKQKYISKPDRKKLAGKLGLKDSQVKIWFQNRRMKWRNSK) form a DNA-binding region, homeobox. A compositionally biased stretch (basic and acidic residues) spans 256 to 266 (DLSDVSKKSSG). Positions 299 to 314 (PSSPFNSSSASKPSDF) are enriched in low complexity. Positions 315 to 331 (SDSEEEGGEQEEEITVS) are enriched in acidic residues.

This sequence belongs to the H2.0 homeobox family.

The protein localises to the nucleus. In terms of biological role, may function within the midpoint progenitor population to inhibit neuronal differentiation, possibly through modulating the function of Xash3. This Xenopus laevis (African clawed frog) protein is Homeobox protein DBX1 (dbx1).